Here is a 375-residue protein sequence, read N- to C-terminus: Trans-enoyl reductase iccB (375 aa).

48–51 (VDAK) is an NADP(+) binding site. Residue 143–150 (AAVATVGL) participates in substrate binding. Residues 204–207 (SSAS), Y222, and 269–270 (LD) contribute to the NADP(+) site. 289-293 (TYSQF) is a substrate binding site. Residue 358 to 359 (IK) participates in NADP(+) binding.

It belongs to the zinc-containing alcohol dehydrogenase family. Monomer.

It carries out the reaction N-[(4E,6E,10S,12Z,14E)-6,10-dimethyl-3-oxohexadeca-4,6,12,14-tetraenoyl]-L-tyrosyl-[ACP] = (3E,5S)-3-[(2E,4E,8S,10E,12Z)-1-hydroxy-4,8-dimethyltetradeca-2,4,10,12-tetraen-1-ylidene]-5-[(4-hydroxyphenyl)methyl]pyrrolidine-2,4-dione + holo-[ACP] + H(+). The protein operates within mycotoxin biosynthesis. Trans-enoyl reductase; part of the gene cluster that mediates the biosynthesis of ilicicolin H, a 4-hydroxy-2-pyridonealkaloid that has potent and broad antifungal activities by inhibiting the mitochondrial respiration chain. IccB collaborates with the hybrid PKS-NRPS synthetase iccA to assemble the backbone of ilicicolin H. The PKS portion of iccA and trans-acting enoyl reductase iccB work together to construct an octaketide, and two methyl groups are introduced by the MT domain of iccA during the chain assembly. The nascent chain is then condensed with tyrosine, catalyzed by the iliA C domain, and the resulting PKS-NRPS hybrid is offloaded by the iliA RED domain to form an advanced tetramic acid intermediate. The biosynthesis of ilicicolin H starts with formation of the tetramic acid by the hybrid PKS-NRPS synthetase iccA with the partnering trans-enoyl reductase iccB since iccA lacks a designated enoylreductase (ER) domain. The cytochrome P450 monooxygenase iccC then catalyzes the ring expansion of the tetramate to the acyclic 2-pyridone. The pericyclase iccD further converts the acyclic 2-pyridone into 8-epi-ilicicolin H. Finally, the epimerase iccE converts 8-epi-ilicicolin H into ilicicolin H via epimerization. IccA to iccE are sufficient for ilicicolin H biosynthesis and the roles of the remaining enzymes, iccF, iccG and iccH within the pathway have still to be determined. In Talaromyces variabilis (Penicillium variabile), this protein is Trans-enoyl reductase iccB.